A 307-amino-acid chain; its full sequence is Methionyl-tRNA formyltransferase (307 aa).

108–111 (SLLP) provides a ligand contact to (6S)-5,6,7,8-tetrahydrofolate.

Belongs to the Fmt family.

It carries out the reaction L-methionyl-tRNA(fMet) + (6R)-10-formyltetrahydrofolate = N-formyl-L-methionyl-tRNA(fMet) + (6S)-5,6,7,8-tetrahydrofolate + H(+). Functionally, attaches a formyl group to the free amino group of methionyl-tRNA(fMet). The formyl group appears to play a dual role in the initiator identity of N-formylmethionyl-tRNA by promoting its recognition by IF2 and preventing the misappropriation of this tRNA by the elongation apparatus. This is Methionyl-tRNA formyltransferase from Stenotrophomonas maltophilia (strain K279a).